The sequence spans 416 residues: MHFYFNVLNLLTVWVMMAQLQQGVPDEKEKTTALKDLLSRIDLDELMKKDEPPLEFPDTLEGFEYSFNEKGQLRHAKTGEPFVFNYREDLHRWNQKRYEALGEIITKHVYGLLEKECHLKKVTLPVDATENEPKSFIFMSEDALTNPDKLLVLIHGNGVVRAGQWARRLIINEDLDSGTQIPYIKKATEEGYGVIVLNPNENYIEVEKTKAQVQLSSDSSDEPAEKRERKDKIQKETKKRRDFYEKYRNPQKEKETMQMYIRDNGSPEEHAIYVWDHFISQSAAENVFFVAHSYGGLAFVELMIQRETEVKNKVTAVALTDSVHNVWHQEAGKTIREWMRENCCNWVSSSEPLDTSVESMLPDCPRVSAGTERHELTSWKSFPSIFKFFSEAMEAKNSSVKPAPTRRSNRIKYEEL.

The first 23 residues, 1 to 23 (MHFYFNVLNLLTVWVMMAQLQQG), serve as a signal peptide directing secretion. The tract at residues 211–248 (AQVQLSSDSSDEPAEKRERKDKIQKETKKRRDFYEKYR) is disordered. The span at 223 to 236 (PAEKRERKDKIQKE) shows a compositional bias: basic and acidic residues. S293 (nucleophile) is an active-site residue. Residue N397 is glycosylated (N-linked (GlcNAc...) asparagine).

This sequence belongs to the ARB2A family.

It localises to the nucleus. The protein resides in the cytoplasm. In terms of biological role, may play role in the regulation of alternative splicing. May have hydrolase activity. The chain is Cotranscriptional regulator ARB2A homolog (ARB2A) from Gallus gallus (Chicken).